A 73-amino-acid polypeptide reads, in one-letter code: uncharacterized protein (73 aa).

This is an uncharacterized protein from Escherichia coli (strain K12).